A 448-amino-acid chain; its full sequence is Squalene synthase ERG9 (448 aa).

The helical transmembrane segment at 428 to 448 (CNVVLFGIGALILSLIYFVLY) threads the bilayer.

Belongs to the phytoene/squalene synthase family. Requires Mg(2+) as cofactor.

The protein localises to the endoplasmic reticulum membrane. It is found in the microsome. It catalyses the reaction 2 (2E,6E)-farnesyl diphosphate + NADPH + H(+) = squalene + 2 diphosphate + NADP(+). It carries out the reaction 2 (2E,6E)-farnesyl diphosphate + NADH + H(+) = squalene + 2 diphosphate + NAD(+). It participates in terpene metabolism; lanosterol biosynthesis; lanosterol from farnesyl diphosphate: step 1/3. Functionally, squalene synthase; part of the third module of ergosterol biosynthesis pathway that includes the late steps of the pathway. ERG9 produces squalene from 2 farnesyl pyrophosphate moieties. The third module or late pathway involves the ergosterol synthesis itself through consecutive reactions that mainly occur in the endoplasmic reticulum (ER) membrane. Firstly, the squalene synthase ERG9 catalyzes the condensation of 2 farnesyl pyrophosphate moieties to form squalene, which is the precursor of all steroids. Squalene synthase is crucial for balancing the incorporation of farnesyl diphosphate (FPP) into sterol and nonsterol isoprene synthesis. Secondly, the squalene epoxidase ERG1 catalyzes the stereospecific oxidation of squalene to (S)-2,3-epoxysqualene, which is considered to be a rate-limiting enzyme in steroid biosynthesis. Then, the lanosterol synthase ERG7 catalyzes the cyclization of (S)-2,3 oxidosqualene to lanosterol, a reaction that forms the sterol core. In the next steps, lanosterol is transformed to zymosterol through a complex process involving various demethylation, reduction and desaturation reactions. The lanosterol 14-alpha-demethylase ERG11 (also known as CYP51) catalyzes C14-demethylation of lanosterol to produce 4,4'-dimethyl cholesta-8,14,24-triene-3-beta-ol, which is critical for ergosterol biosynthesis. The C-14 reductase ERG24 reduces the C14=C15 double bond of 4,4-dimethyl-cholesta-8,14,24-trienol to produce 4,4-dimethyl-cholesta-8,24-dienol. 4,4-dimethyl-cholesta-8,24-dienol is substrate of the C-4 demethylation complex ERG25-ERG26-ERG27 in which ERG25 catalyzes the three-step monooxygenation required for the demethylation of 4,4-dimethyl and 4alpha-methylsterols, ERG26 catalyzes the oxidative decarboxylation that results in a reduction of the 3-beta-hydroxy group at the C-3 carbon to an oxo group, and ERG27 is responsible for the reduction of the keto group on the C-3. ERG28 has a role as a scaffold to help anchor ERG25, ERG26 and ERG27 to the endoplasmic reticulum and ERG29 regulates the activity of the iron-containing C4-methylsterol oxidase ERG25. Then, the sterol 24-C-methyltransferase ERG6 catalyzes the methyl transfer from S-adenosyl-methionine to the C-24 of zymosterol to form fecosterol. The C-8 sterol isomerase ERG2 catalyzes the reaction which results in unsaturation at C-7 in the B ring of sterols and thus converts fecosterol to episterol. The sterol-C5-desaturase ERG3 then catalyzes the introduction of a C-5 double bond in the B ring to produce 5-dehydroepisterol. The C-22 sterol desaturase ERG5 further converts 5-dehydroepisterol into ergosta-5,7,22,24(28)-tetraen-3beta-ol by forming the C-22(23) double bond in the sterol side chain. Finally, ergosta-5,7,22,24(28)-tetraen-3beta-ol is substrate of the C-24(28) sterol reductase ERG4 to produce ergosterol. The sequence is that of Squalene synthase ERG9 from Candida albicans (strain SC5314 / ATCC MYA-2876) (Yeast).